Here is a 330-residue protein sequence, read N- to C-terminus: Phosphate acyltransferase (330 aa).

This sequence belongs to the PlsX family. Homodimer. Probably interacts with PlsY.

Its subcellular location is the cytoplasm. The enzyme catalyses a fatty acyl-[ACP] + phosphate = an acyl phosphate + holo-[ACP]. It participates in lipid metabolism; phospholipid metabolism. In terms of biological role, catalyzes the reversible formation of acyl-phosphate (acyl-PO(4)) from acyl-[acyl-carrier-protein] (acyl-ACP). This enzyme utilizes acyl-ACP as fatty acyl donor, but not acyl-CoA. This is Phosphate acyltransferase from Streptococcus agalactiae serotype III (strain NEM316).